Here is a 314-residue protein sequence, read N- to C-terminus: tRNA pseudouridine synthase B (314 aa).

Histidine 43 contacts substrate. The Nucleophile role is filled by aspartate 48. Residues tyrosine 76, tyrosine 179, and leucine 200 each contribute to the substrate site.

Belongs to the pseudouridine synthase TruB family. Type 1 subfamily.

It carries out the reaction uridine(55) in tRNA = pseudouridine(55) in tRNA. In terms of biological role, responsible for synthesis of pseudouridine from uracil-55 in the psi GC loop of transfer RNAs. The chain is tRNA pseudouridine synthase B from Escherichia coli O139:H28 (strain E24377A / ETEC).